Reading from the N-terminus, the 562-residue chain is Protein wntless (562 aa).

Over 1 to 13 (MSGTILENLSGRK) the chain is Cytoplasmic. Residues 14–34 (LSILVSSLLLCQVACFLIGGL) traverse the membrane as a helical segment. The Lumenal portion of the chain corresponds to 35–239 (YAPVPAGHQI…AIHQNGGFTQ (205 aa)). 2 N-linked (GlcNAc...) asparagine glycosylation sites follow: Asn-58 and Asn-103. Residues 240 to 260 (VWLLLKSVLFPFIIGIMVWFW) traverse the membrane as a helical segment. The Cytoplasmic segment spans residues 261–270 (RRVHILQRSP). Residues 271-291 (ALLEYMLLYLGGALSFLNLPL) form a helical membrane-spanning segment. Residues 292 to 311 (EYLTLSFEMPYMLLLSDVRQ) lie on the Lumenal side of the membrane. The chain crosses the membrane as a helical span at residues 312–332 (GIFYAMLLSFWLVFAGEHMLI). The Cytoplasmic segment spans residues 333–344 (QDSPNKSTIRSR). The helical transmembrane segment at 345-365 (YWKHLSAVVVGCISLFVFDIC) threads the bilayer. Residues 366-390 (ERGMQLRNPFYSIWTTPLGAKVAMS) are Lumenal-facing. Residues 391–411 (FIVLAGVSAGIYFLFLCYMVW) form a helical membrane-spanning segment. Over 412 to 441 (KVFKDIGDKRTSLPSMSQARRLHYEGLIYR) the chain is Cytoplasmic. The helical transmembrane segment at 442-462 (FKFLMLATLLCAGLTVAGFIM) threads the bilayer. Residues 463–482 (GQMAEGHWKWNEDIEIQLTS) are Lumenal-facing. Residues 483–503 (AFLTGVYGMWNIYIFALLILY) traverse the membrane as a helical segment. The Cytoplasmic segment spans residues 504–562 (APSHKQWPTMRHSDETTQSNENIVASAASEEIEFSNLPSDSNPSEISSLTSFTRKVAFD). Residues 538-562 (SNLPSDSNPSEISSLTSFTRKVAFD) form a disordered region. Positions 539 to 556 (NLPSDSNPSEISSLTSFT) are enriched in polar residues.

Belongs to the wntless family. As to quaternary structure, interacts with wg; in the Golgi. Interacts with Vps35, a component of the retromer complex; wls stability is regulated by Vps35.

It localises to the presynaptic cell membrane. The protein localises to the postsynaptic cell membrane. Its subcellular location is the cell membrane. It is found in the endoplasmic reticulum membrane. The protein resides in the endosome membrane. It localises to the golgi apparatus membrane. Its function is as follows. A segment polarity gene required for wingless (wg)-dependent patterning processes, acting in both wg-sending cells and wg-target cells. In non-neuronal cells wls directs wg secretion. The wls traffic loop encompasses the Golgi, the cell surface, an endocytic compartment and a retrograde route leading back to the Golgi, and involves clathrin-mediated endocytosis and the retromer complex (a conserved protein complex consisting of Vps35 and Vps26). In neuronal cells (the larval motorneuron NMJ), the wg signal moves across the synapse via the release of wls-containing exosome-like vesicles. Postsynaptic wls is required for the trafficking of fz2 through the fz2-interacting protein Grip. The chain is Protein wntless from Drosophila mojavensis (Fruit fly).